The chain runs to 175 residues: NADH-ubiquinone oxidoreductase chain 6 (175 aa).

5 helical membrane passes run Met1–Ser21, Ile26–Leu46, Gly47–Phe67, Val87–Ile107, and Trp152–Thr172.

It belongs to the complex I subunit 6 family.

Its subcellular location is the mitochondrion membrane. The enzyme catalyses a ubiquinone + NADH + 5 H(+)(in) = a ubiquinol + NAD(+) + 4 H(+)(out). In terms of biological role, core subunit of the mitochondrial membrane respiratory chain NADH dehydrogenase (Complex I) that is believed to belong to the minimal assembly required for catalysis. Complex I functions in the transfer of electrons from NADH to the respiratory chain. The immediate electron acceptor for the enzyme is believed to be ubiquinone. The polypeptide is NADH-ubiquinone oxidoreductase chain 6 (MT-ND6) (Dasypus novemcinctus (Nine-banded armadillo)).